Reading from the N-terminus, the 198-residue chain is MPQLVLASTSSYRRALLEKLQLPFITDAPETDETPHAGEPAEALVQRLASAKAQALAGRYPQHLIIGSDQVCVIDGKITGKPLQYSTAVKQLQQASGQCVTFYTGLTLLNTANNSINCTCETFDVYFRTLSQAEIDGYLLREQPWNCAGSFKSEGLGITLFERLAGRDPNTLIGLPLIALTQMLIEQGVNPLTVKPVE.

Catalysis depends on Asp-69, which acts as the Proton acceptor.

The protein belongs to the Maf family. YceF subfamily. A divalent metal cation is required as a cofactor.

It is found in the cytoplasm. It catalyses the reaction N(7)-methyl-GTP + H2O = N(7)-methyl-GMP + diphosphate + H(+). In terms of biological role, nucleoside triphosphate pyrophosphatase that hydrolyzes 7-methyl-GTP (m(7)GTP). May have a dual role in cell division arrest and in preventing the incorporation of modified nucleotides into cellular nucleic acids. In Yersinia pseudotuberculosis serotype I (strain IP32953), this protein is 7-methyl-GTP pyrophosphatase.